A 1958-amino-acid chain; its full sequence is Probable Rho GTPase-activating protein CG5521 (1958 aa).

Disordered regions lie at residues 1–21 (MFTK…QDSK), 400–424 (PPFL…RSQR), and 635–804 (GSVW…GIEG). Residues 400–414 (PPFLLEPNDDPPPPS) show a composition bias toward pro residues. Positions 640 to 656 (GSGSNSAANGGSAASAA) are enriched in low complexity. Phosphoserine is present on residues S718, S764, and S767. The span at 758 to 774 (DLRRAMSLDSLARKGDA) shows a compositional bias: basic and acidic residues. Residues 775–785 (EETDSYQEGDN) show a composition bias toward acidic residues. Phosphoserine occurs at positions 787, 791, 793, and 795. The span at 788-800 (GAGSRSPSPTASS) shows a compositional bias: polar residues. Y980 carries the phosphotyrosine modification. The disordered stretch occupies residues 1534–1568 (HSTQAPSPALRHASSNSSLQQPDQRSLHSTTASFD). Residues 1546–1568 (ASSNSSLQQPDQRSLHSTTASFD) show a composition bias toward polar residues. S1551 carries the post-translational modification Phosphoserine. In terms of domain architecture, Rap-GAP spans 1612–1819 (LRNVDLQKCR…EERNRSLDSV (208 aa)). Residues 1903–1958 (ATGMSSASPRGPRKLGAPFKSVTKKHSLQHIAVGGGAGAGGDTPPESPTLPQRRFK) form a disordered region. A Phosphothreonine modification is found at T1945. Position 1949 is a phosphoserine (S1949).

In Drosophila melanogaster (Fruit fly), this protein is Probable Rho GTPase-activating protein CG5521.